Here is a 253-residue protein sequence, read N- to C-terminus: uncharacterized protein (253 aa).

The tract at residues 211–241 (TTRRKRYREDRDSGEDLGAESKRGNGSVRYT) is disordered.

This is an uncharacterized protein from Ictalurid herpesvirus 1 (strain Auburn) (IcHV-1).